The chain runs to 154 residues: MYTKAIYPGTFDPVTNGHLDIIKRACKMFDKIIVAVADNKDKKTMFSLEKRVELMKKATSHLPKIEVESFNSLLVDFAREKECKIIIRGLRAVSDFEYELQMGYANKSLDSEIDTIYLMPNLENAFISSSVVRSILKYNGDVSHLIPNEIIKDL.

Residue Thr10 coordinates substrate. ATP-binding positions include 10 to 11 (TF) and His18. Residues Lys42, Leu74, and Arg88 each contribute to the substrate site. Residues 89–91 (GLR), Glu99, and 124–130 (NAFISSS) each bind ATP.

Belongs to the bacterial CoaD family. In terms of assembly, homohexamer. Mg(2+) is required as a cofactor.

The protein resides in the cytoplasm. It catalyses the reaction (R)-4'-phosphopantetheine + ATP + H(+) = 3'-dephospho-CoA + diphosphate. It functions in the pathway cofactor biosynthesis; coenzyme A biosynthesis; CoA from (R)-pantothenate: step 4/5. Reversibly transfers an adenylyl group from ATP to 4'-phosphopantetheine, yielding dephospho-CoA (dPCoA) and pyrophosphate. The chain is Phosphopantetheine adenylyltransferase from Nautilia profundicola (strain ATCC BAA-1463 / DSM 18972 / AmH).